Consider the following 418-residue polypeptide: Gamma-glutamyl phosphate reductase (418 aa).

The protein belongs to the gamma-glutamyl phosphate reductase family.

It localises to the cytoplasm. The catalysed reaction is L-glutamate 5-semialdehyde + phosphate + NADP(+) = L-glutamyl 5-phosphate + NADPH + H(+). It functions in the pathway amino-acid biosynthesis; L-proline biosynthesis; L-glutamate 5-semialdehyde from L-glutamate: step 2/2. Functionally, catalyzes the NADPH-dependent reduction of L-glutamate 5-phosphate into L-glutamate 5-semialdehyde and phosphate. The product spontaneously undergoes cyclization to form 1-pyrroline-5-carboxylate. This Histophilus somni (strain 129Pt) (Haemophilus somnus) protein is Gamma-glutamyl phosphate reductase.